A 181-amino-acid polypeptide reads, in one-letter code: MSRIGKNPVPVPEKVTVSLDGLTVKVKGPKGELERTLPEGVSVSVSQDNNTIVVSPTSTKRISRERHGLSRTLVANMIEGVSNGYSKALEIVGVGSRAQVKGKTLVVSAGYSHPVEMEAPEGITFKVENNTRVIVSGIDKELVGNEAAKVRAIRPPEPYKGKGIKYEGERILRKAGKSGKK.

It belongs to the universal ribosomal protein uL6 family. In terms of assembly, part of the 50S ribosomal subunit.

In terms of biological role, this protein binds to the 23S rRNA, and is important in its secondary structure. It is located near the subunit interface in the base of the L7/L12 stalk, and near the tRNA binding site of the peptidyltransferase center. The protein is Large ribosomal subunit protein uL6 of Synechococcus sp. (strain CC9605).